Here is a 273-residue protein sequence, read N- to C-terminus: MALKVYNSVTQSLRQVVQVDKSELWKGRPLKKLAKGITKTGGRNNLGRITIWHRGKGHKQLYRMIDFKRRVFDIYATVERIEYDPNRTAFIALIKYDDGKFSYILSPRNLNVGDKIISSDKAEINVGNCLPLEVIPVGTIIHNIEIKPGKGGQVARSAGTYAVLLNKDSGYAQIKFRSGEVRRISLASRATVGSVSNIDHKNISYGKAGRVRWLGRRPVVRGVAMNPVDHPHGGGEGKTSGGRHPVTPWGKKTKGKKTRKNKFTSRFIVKRRN.

The interval 224 to 260 (AMNPVDHPHGGGEGKTSGGRHPVTPWGKKTKGKKTRK) is disordered. Basic residues predominate over residues 251-260 (KKTKGKKTRK).

The protein belongs to the universal ribosomal protein uL2 family. As to quaternary structure, part of the 50S ribosomal subunit. Forms a bridge to the 30S subunit in the 70S ribosome.

In terms of biological role, one of the primary rRNA binding proteins. Required for association of the 30S and 50S subunits to form the 70S ribosome, for tRNA binding and peptide bond formation. It has been suggested to have peptidyltransferase activity; this is somewhat controversial. Makes several contacts with the 16S rRNA in the 70S ribosome. This chain is Large ribosomal subunit protein uL2, found in Orientia tsutsugamushi (strain Ikeda) (Rickettsia tsutsugamushi).